The chain runs to 195 residues: HTH-type transcriptional regulator BetI (195 aa).

Residues 8-68 (SIRRRQLIDA…ATMRDITSQL (61 aa)) form the HTH tetR-type domain. The H-T-H motif DNA-binding region spans 31 to 50 (TIAQIARRAGVSTGIISHYF).

The protein operates within amine and polyamine biosynthesis; betaine biosynthesis via choline pathway [regulation]. Its function is as follows. Repressor involved in the biosynthesis of the osmoprotectant glycine betaine. It represses transcription of the choline transporter BetT and the genes of BetAB involved in the synthesis of glycine betaine. This Escherichia coli O8 (strain IAI1) protein is HTH-type transcriptional regulator BetI.